Here is a 277-residue protein sequence, read N- to C-terminus: Phosphatidylglycerol--prolipoprotein diacylglyceryl transferase (277 aa).

Transmembrane regions (helical) follow at residues 18 to 38 (ISVKWYGVIIASAVVIALLLA), 51 to 71 (IIVDLLIWAIPISIISARIYY), 89 to 109 (IWHGGIAIYGALIGAVLTAII), and 116 to 136 (ISFWQLADVVAPSLIIAQAIG). A 1,2-diacyl-sn-glycero-3-phospho-(1'-sn-glycerol) is bound at residue arginine 137. A run of 3 helical transmembrane segments spans residues 177-197 (QPTFLYESLWNVLGFVILLII), 205-225 (GELFLGYVIWYSFGRFFIEGM), and 235-255 (FRVSQALSLLLIVLSIGIIIY).

Belongs to the Lgt family.

It is found in the cell membrane. The enzyme catalyses L-cysteinyl-[prolipoprotein] + a 1,2-diacyl-sn-glycero-3-phospho-(1'-sn-glycerol) = an S-1,2-diacyl-sn-glyceryl-L-cysteinyl-[prolipoprotein] + sn-glycerol 1-phosphate + H(+). Its pathway is protein modification; lipoprotein biosynthesis (diacylglyceryl transfer). Functionally, catalyzes the transfer of the diacylglyceryl group from phosphatidylglycerol to the sulfhydryl group of the N-terminal cysteine of a prolipoprotein, the first step in the formation of mature lipoproteins. The polypeptide is Phosphatidylglycerol--prolipoprotein diacylglyceryl transferase (Listeria monocytogenes serovar 1/2a (strain ATCC BAA-679 / EGD-e)).